The sequence spans 631 residues: Nucleoside triphosphatase I (631 aa).

Positions 42–204 constitute a Helicase ATP-binding domain; it reads FLGLDSMHSL…TMLVNLLRPG (163 aa). 55–62 contributes to the ATP binding site; sequence HETGVGKT. A DEXH box motif is present at residues 141 to 144; that stretch reads DECH. In terms of domain architecture, Helicase C-terminal spans 367–532; the sequence is KFIDVCLGIL…EFVQLFRVFK (166 aa).

The protein belongs to the helicase family. NPH I subfamily. As to quaternary structure, monomer.

It catalyses the reaction a ribonucleoside 5'-triphosphate + H2O = a ribonucleoside 5'-diphosphate + phosphate + H(+). Functionally, serves two roles in transcription; it acts in concert with viral termination factor/capping enzyme to catalyze release of UUUUUNU-containing nascent RNA from the elongation complex, and it acts by itself as a polymerase elongation factor to facilitate readthrough of intrinsic pause sites. This is Nucleoside triphosphatase I (NPH1) from Homo sapiens (Human).